Reading from the N-terminus, the 310-residue chain is Protein BIG GRAIN 1 (310 aa).

Residues 81–141 (RAPGPHATTS…KKAKKPGASI (61 aa)) form a disordered region. The span at 90-106 (SSSSECSSYGGFSSSEA) shows a compositional bias: low complexity.

This sequence belongs to the BIG GRAIN 1 (BG1) plant protein family.

It is found in the cell membrane. In terms of biological role, involved in auxin transport. Positive regulator of the auxin signaling pathway involved in gravitropism, plant growth and grain development. The polypeptide is Protein BIG GRAIN 1 (Oryza sativa subsp. indica (Rice)).